The primary structure comprises 712 residues: Solute carrier organic anion transporter family member 1C1 (712 aa).

Residues 1-43 are Cytoplasmic-facing; sequence MDTSSKENIQLFCKTSVQPVGRPSFKTEYPSSEEKQPCCGELK. A helical transmembrane segment spans residues 44-63; it reads VFLCALSFVYFAKALAEGYL. Residues 64-82 are Extracellular-facing; that stretch reads KSTITQIERRFDIPSSLVG. A helical membrane pass occupies residues 83 to 103; that stretch reads VIDGSFEIGNLLVITFVSYFG. Over 104–109 the chain is Cytoplasmic; sequence AKLHRP. Residues 110–134 form a helical membrane-spanning segment; the sequence is KIIGAGCVIMGVGTLLIAMPQFFME. At 135–184 the chain is on the extracellular side; the sequence is QYKYERYSPSSNSTLSISPCLLESSSQLPVSVMEKSKSKISNECEVDTSS. N146 carries an N-linked (GlcNAc...) asparagine glycan. Residues 185–213 form a helical membrane-spanning segment; the sequence is SMWIYVFLGNLLRGIGETPIQPLGIAYLD. Residues 214–232 lie on the Cytoplasmic side of the membrane; that stretch reads DFASEDNAAFYIGCVQTVA. A helical membrane pass occupies residues 233–253; it reads IIGPIFGFLLGSLCAKLYVDI. Residues 254–271 lie on the Extracellular side of the membrane; the sequence is GFVNLDHITITPKDPQWV. A helical transmembrane segment spans residues 272 to 296; it reads GAWWLGYLIAGIISLLAAVPFWYLP. Topologically, residues 297-348 are cytoplasmic; it reads KSLPRSQSREDSNSSSEKSKFIIDDHTDYQTPQGENAKIMEMARDFLPSLKN. A helical membrane pass occupies residues 349-370; sequence LFGNPVYFLYLCTSTVQFNSLF. Topologically, residues 371 to 390 are extracellular; it reads GMVTYKPKYIEQQYGQSSSR. Residues 391–414 traverse the membrane as a helical segment; it reads ANFVIGLINIPAVALGIFSGGIVM. The Cytoplasmic segment spans residues 415-418; the sequence is KKFR. Residues 419–442 form a helical membrane-spanning segment; sequence ISVCGAAKLYLGSSVFGYLLFLSL. Over 443–554 the chain is Extracellular; it reads FALGCENSDV…NGCPQMFLYF (112 aa). A Kazal-like domain is found at 470-525; the sequence is RALFSDCNSRCKCSETKWEPMCGENGITYVSACLAGCQTSNRSGKNIIFYNCTCVG. Cystine bridges form between C476–C506, C482–C502, and C491–C523. N-linked (GlcNAc...) asparagine glycans are attached at residues N510, N520, and N533. A helical membrane pass occupies residues 555 to 577; the sequence is LVISVITSYTLSLGGIPGYILLL. Topologically, residues 578-586 are cytoplasmic; it reads RCIKPQLKS. A helical transmembrane segment spans residues 587–612; it reads FALGIYTLAIRVLAGIPAPVYFGVLI. The Extracellular portion of the chain corresponds to 613 to 646; it reads DTSCLKWGFKRCGSRGSCRLYDSNVFRHIYLGLT. The helical transmembrane segment at 647 to 664 threads the bilayer; the sequence is VILGTVSILLSIAVLFIL. The Cytoplasmic portion of the chain corresponds to 665–712; the sequence is KKNYVSKHRSFITKRERTMVSTRFQKENYTTSDHLLQPNYWPGKETQL.

It belongs to the organo anion transporter (TC 2.A.60) family. As to expression, highly expressed in brain and in Leydig cells in testis. Localized in nests of Leydig cells (at protein level). Expressed in choroid plexus (at protein level). Not strongly enriched in cerebral microvessels.

It is found in the cell membrane. It carries out the reaction 3,3',5'-triiodo-L-thyronine(out) = 3,3',5'-triiodo-L-thyronine(in). The catalysed reaction is L-thyroxine(out) = L-thyroxine(in). It catalyses the reaction L-thyroxine sulfate(out) = L-thyroxine sulfate(in). Its function is as follows. Mediates the Na(+)-independent high affinity transport of organic anions such as the thyroid hormones L-thyroxine (T4), L-thyroxine sulfate (T4S), and 3,3',5'-triiodo-L-thyronine (reverse T3, rT3) at the plasma membrane. Regulates T4 levels in different brain regions by transporting T4, and also by serving as an export pump for T4S, which is a source of T4 after hydrolysis by local sulfatases. Increases the access of these substrates to the intracellular sites where they are metabolized by the deiodinases. Other potential substrates, such as triiodothyronine (T3), 17-beta-glucuronosyl estradiol (17beta-estradiol 17-O-(beta-D-glucuronate)), estrone-3-sulfate (E1S) and sulfobromophthalein (BSP) are transported with much lower efficiency. Transports T4 and E1S in a pH-insensitive manner. Facilitates the transport of thyroid hormones across the blood-brain barrier and into glia and neuronal cells in the brain. The chain is Solute carrier organic anion transporter family member 1C1 (SLCO1C1) from Homo sapiens (Human).